The chain runs to 236 residues: Peptidase E (236 aa).

Active-site charge relay system residues include S122, D137, and H159.

This sequence belongs to the peptidase S51 family.

Its subcellular location is the cytoplasm. The enzyme catalyses Dipeptidase E catalyzes the hydrolysis of dipeptides Asp-|-Xaa. It does not act on peptides with N-terminal Glu, Asn or Gln, nor does it cleave isoaspartyl peptides.. In terms of biological role, hydrolyzes dipeptides containing N-terminal aspartate residues. May play a role in allowing the cell to use peptide aspartate to spare carbon otherwise required for the synthesis of the aspartate family of amino acids. This is Peptidase E from Shewanella sp. (strain ANA-3).